The sequence spans 467 residues: Ribulose bisphosphate carboxylase large chain (467 aa).

Lys5 carries the N6,N6,N6-trimethyllysine modification. Asn114 and Thr164 together coordinate substrate. Lys166 functions as the Proton acceptor in the catalytic mechanism. Substrate is bound at residue Lys168. Positions 192, 194, and 195 each coordinate Mg(2+). The residue at position 192 (Lys192) is an N6-carboxylysine. His285 serves as the catalytic Proton acceptor. Residues Arg286, His318, and Ser370 each coordinate substrate.

Belongs to the RuBisCO large chain family. Type I subfamily. In terms of assembly, heterohexadecamer of 8 large chains and 8 small chains; disulfide-linked. The disulfide link is formed within the large subunit homodimers. Mg(2+) is required as a cofactor. The disulfide bond which can form in the large chain dimeric partners within the hexadecamer appears to be associated with oxidative stress and protein turnover.

It localises to the plastid. It is found in the chloroplast. The enzyme catalyses 2 (2R)-3-phosphoglycerate + 2 H(+) = D-ribulose 1,5-bisphosphate + CO2 + H2O. It carries out the reaction D-ribulose 1,5-bisphosphate + O2 = 2-phosphoglycolate + (2R)-3-phosphoglycerate + 2 H(+). Functionally, ruBisCO catalyzes two reactions: the carboxylation of D-ribulose 1,5-bisphosphate, the primary event in carbon dioxide fixation, as well as the oxidative fragmentation of the pentose substrate in the photorespiration process. Both reactions occur simultaneously and in competition at the same active site. This Tasmannia insipida (Pepperbush) protein is Ribulose bisphosphate carboxylase large chain.